The sequence spans 149 residues: Arginine repressor (149 aa).

This sequence belongs to the ArgR family.

It is found in the cytoplasm. The protein operates within amino-acid biosynthesis; L-arginine biosynthesis [regulation]. Functionally, regulates arginine biosynthesis genes. The sequence is that of Arginine repressor from Bacillus pumilus (strain SAFR-032).